The sequence spans 490 residues: Cysteine--tRNA ligase (490 aa).

Cys36 is a Zn(2+) binding site. The 'HIGH' region motif lies at 38-48 (VTVYDYSHIGH). Zn(2+)-binding residues include Cys216, His241, and Glu245. Positions 278–282 (KMSKS) match the 'KMSKS' region motif. Lys281 is a binding site for ATP.

The protein belongs to the class-I aminoacyl-tRNA synthetase family. In terms of assembly, monomer. The cofactor is Zn(2+).

The protein localises to the cytoplasm. The catalysed reaction is tRNA(Cys) + L-cysteine + ATP = L-cysteinyl-tRNA(Cys) + AMP + diphosphate. This Magnetococcus marinus (strain ATCC BAA-1437 / JCM 17883 / MC-1) protein is Cysteine--tRNA ligase.